The following is a 482-amino-acid chain: MNGASRGDVQRPTPVQAPAKRPIPPTVFRFEKASKIGTSLDTTPKELPIRRPVPLPGPRFVKDVNPSPPATSSPNVQTQCHQPPVVRSQTHQASVSQTTPTQTTPSQYTPASVSTARAPQFHRSSHVTPSQQQRIEQAFGPAPVSQSQPQNGSYIQYNEPSTSVASTTTSFYSPNESEPVFTHAISFKPNEPENGQKAREQLELLDSGKINEINQSKVPTTIELPPNCKLFQYSWVLDGIPRTLLVPMPMDATEEDVKAMLPKTLEMDSNLFNNARPRDELPVLSFPNGTVPNVEMIGPKVQQPMLVNPKQFNRIMRRREMRQQLEASGRLPLARQKYLHESRHLHALKRKRGLDGRFDNTKTAESSSMVSSTTSPRKLKRRNRLPGEETSDSSSIVLPSPVEIQPKGGIVNSSMPSTSTGYINNGMDHQTDYIEHQQPMSTYDQYHDHVQYIAPDGNVNYHNNHDNGVDLTGSDGQSFTNL.

A disordered region spans residues M1–P160. Residues S72 to A93 show a composition bias toward polar residues. Low complexity predominate over residues S94–P110. 2 stretches are compositionally biased toward polar residues: residues H126–I135 and V144–P160. Positions L306–G329 match the Subunit association domain (SAD) motif. A DNA-binding region (NFYA/HAP2-type) is located at residues Q336–T361. Positions H344 to S414 are disordered. A compositionally biased stretch (basic and acidic residues) spans G353–K362. Residues T363–S375 show a composition bias toward low complexity.

The protein belongs to the NFYA/HAP2 subunit family. As to quaternary structure, forms a heterotrimeric transcription factor complex (nfya-1-NF-Y complex) composed of nfya-1, nfyb-1 and nfyc-1, which binds to 5'-CCAAT-3' box motif in the promoters of its target genes. Interacts with the nfyb-1 and nfyc-1 dimer; the interaction is required for subsequent binding to the 5'-CCAAT-3' box motif in DNA. Does not interact with either nfyb-1 or nfyc-1 in their monomeric form. Interacts with mes-3. As to expression, expressed in certain parts of the gonads with high expression in fertilized oocytes in the uterus and mature oocytes from the distal to the proximal arm of the gonad, but weak expression in the syncytial ovaries and immature oocytes at the beginning of the proximal arm of the gonad. Highly expressed in the head ganglia neurons and the developing hermaphrodite vulva and male tail. Weakly expressed in most somatic cells. Not expressed in the intestine, the hypodermis, body wall muscle surrounding the pseudocoelomic space, secretory cells in the pharyngeal terminal bulb wall, in the small ganglia surrounding the pharynx and in the neurons running anteriorly to the sensory organs in the head.

The protein localises to the nucleus. In terms of biological role, component of the sequence-specific heterotrimeric transcription factor (nfya-1-NF-Y) which specifically recognizes a 5'-CCAAT-3' box motif found in the promoters of its target genes to regulate their expression and control cellular identity in particular tissue types. In association with the components in the nfya-1-NF-Y complex, represses the expression of the T-box transcription factor tbx-2 throughout larval development, which most likely restricts its expression to certain tissues. May act to repress txb-2 expression in conjunction with tbx-2 itself, which has an autoregulatory role. With the components in this complex, negatively regulates the expression of the homeobox protein egl-5 to spatially restrict its expression in tissues such as the head. May regulate egl-5 expression in association with the mes-2-mes-3-mes-6 complex. The polypeptide is Nuclear transcription factor Y subunit nfya-1 (Caenorhabditis elegans).